The chain runs to 241 residues: GDSL esterase/lipase At5g45920 (241 aa).

S12 functions as the Nucleophile in the catalytic mechanism. Active-site residues include D189 and H192.

Belongs to the 'GDSL' lipolytic enzyme family.

The polypeptide is GDSL esterase/lipase At5g45920 (Arabidopsis thaliana (Mouse-ear cress)).